Consider the following 278-residue polypeptide: Urease accessory protein UreD (278 aa).

It belongs to the UreD family. UreD, UreF and UreG form a complex that acts as a GTP-hydrolysis-dependent molecular chaperone, activating the urease apoprotein by helping to assemble the nickel containing metallocenter of UreC. The UreE protein probably delivers the nickel.

Its subcellular location is the cytoplasm. Its function is as follows. Required for maturation of urease via the functional incorporation of the urease nickel metallocenter. This Pseudomonas putida (strain ATCC 700007 / DSM 6899 / JCM 31910 / BCRC 17059 / LMG 24140 / F1) protein is Urease accessory protein UreD.